Here is a 1473-residue protein sequence, read N- to C-terminus: Collagen alpha-1(XVII) chain (1473 aa).

Residues 1–19 (MDITQKNKRDGTEVTERII) show a composition bias toward basic and acidic residues. 2 disordered regions span residues 1 to 155 (MDIT…PSTR) and 168 to 188 (GSRSASVSPTRNSSNTLPIPK). Residues 1 to 474 (MDITQKNKRD…CGSWCSWWKW (474 aa)) are Cytoplasmic-facing. The tract at residues 1 to 572 (MDITQKNKRD…MTEQENGNLR (572 aa)) is nonhelical region (NC16). 3 stretches are compositionally biased toward polar residues: residues 57 to 96 (LTHGSSGYINSSGSLRGNASTSSYRRAHSPASTLPNSPGS), 111 to 120 (EGSSSGNSSP), and 170 to 184 (RSASVSPTRNSSNTL). The interval 146 to 231 (RLQSASPSTR…WSSTLPAGSS (86 aa)) is necessary for interaction with DST and for the recruitment of DST to hemidesmosome. Residues 475-495 (LLGLLLTWLLLLGLLFGLIAL) traverse the membrane as a helical; Signal-anchor for type II membrane protein segment. At 496–1473 (AEEVRKLKAR…RRRRSIAVKP (978 aa)) the chain is on the extracellular side. Disordered regions lie at residues 567-1017 (ENGN…LSSS), 1173-1234 (FRGI…ISGA), and 1261-1308 (SFIV…SSMG). Residues 573-1459 (GSPGPKGDMG…KGEKGDKGDQ (887 aa)) form a triple-helical region region. Low complexity-rich tracts occupy residues 619-638 (EPGMEGPMGQRGREGPMGPR), 667-678 (PGSVGPKGSIGP), 729-742 (EPGAKGAMGPAGPD), and 769-790 (PGKPGLTGPQGPQGIPGTPGRP). Over residues 814-835 (PGPPGPPGAMGPPGPPGAPGPV) the composition is skewed to pro residues. 2 stretches are compositionally biased toward low complexity: residues 837–847 (PAGLPGQQGPR) and 854–866 (GESFMGSSSSFSE). Pro residues-rich tracts occupy residues 878–899 (PPGPPGPPGPPGEGLPGPPGPP) and 913–922 (PPGPPGPPGP). Residues 940 to 957 (FPGLSGSGSSSLGLNLQG) show a composition bias toward low complexity. Pro residues-rich tracts occupy residues 1001–1011 (PPGPPGPPGPP) and 1179–1188 (PPGPPGPPGL). Polar residues predominate over residues 1198 to 1210 (TEDLSSYLQTAGL). Composition is skewed to pro residues over residues 1214 to 1228 (PGPPGPPGPPGPRGP) and 1266 to 1275 (PPGPPGPQGP). The span at 1283-1307 (STDSSYSRSGSSSSFSRDTSYSSSM) shows a compositional bias: low complexity. Asparagine 1404 carries an N-linked (GlcNAc...) asparagine glycan. The segment at 1417-1473 (GAIPGPPGQKGEMGIPGPKGERGPAGPPGPRGHKGEKGDKGDQFYIGRRRRSIAVKP) is disordered. A compositionally biased stretch (basic and acidic residues) spans 1449-1458 (HKGEKGDKGD). A nonhelical region (NC1) region spans residues 1460-1473 (FYIGRRRRSIAVKP). Residues 1463 to 1473 (GRRRRSIAVKP) show a composition bias toward basic residues.

As to quaternary structure, homotrimers of alpha 1(XVII)chains. Interacts (via cytoplasmic region) with ITGB4 (via cytoplasmic region). Interacts (via cytoplasmic region) with DST (via N-terminus). Interacts (via N-terminus) with PLEC. Interacts (via cytoplasmic region) with DSP. The intracellular/endo domain is disulfide-linked. In terms of processing, prolines at the third position of the tripeptide repeating unit (G-X-Y) are hydroxylated in some or all of the chains. Post-translationally, the ectodomain is shedded from the surface of keratinocytes resulting in a 120-kDa soluble form, also named as 120 kDa linear IgA disease antigen homolog. The shedding is mediated by membrane-bound metalloproteases.

The protein resides in the cell junction. Its subcellular location is the hemidesmosome. It is found in the membrane. The protein localises to the secreted. It localises to the extracellular space. The protein resides in the extracellular matrix. Its subcellular location is the basement membrane. May play a role in the integrity of hemidesmosome and the attachment of basal keratinocytes to the underlying basement membrane. In terms of biological role, the 120 kDa linear IgA disease antigen homolog is an anchoring filament component involved in dermal-epidermal cohesion. The chain is Collagen alpha-1(XVII) chain (COL17A1) from Bos taurus (Bovine).